The chain runs to 261 residues: Calbindin (261 aa).

Residue A2 is modified to N-acetylalanine. Residues 2–7 are interaction with RANBP9; it reads AESHLQ. 5 EF-hand domains span residues 11–46, 53–88, 98–133, 142–177, and 186–221; these read ITAS…LLQA, ELSP…EENF, KSCE…LLEK, KLAE…QENF, and MCGK…LCEK. Ca(2+) is bound by residues D24, D26, S28, Y30, and E35. Positions 111, 113, 115, 122, 155, 157, 159, 161, 166, 199, 201, 203, 205, and 210 each coordinate Ca(2+).

Belongs to the calbindin family. As to quaternary structure, interacts with RANBP9.

In terms of biological role, buffers cytosolic calcium. May stimulate a membrane Ca(2+)-ATPase and a 3',5'-cyclic nucleotide phosphodiesterase. The polypeptide is Calbindin (Calb1) (Rattus norvegicus (Rat)).